We begin with the raw amino-acid sequence, 336 residues long: Anthranilate phosphoribosyltransferase (336 aa).

5-phospho-alpha-D-ribose 1-diphosphate is bound by residues G79, 82–83, T87, 89–92, 107–115, and S119; these read GD, NIST, and KHGNRSVSS. G79 is an anthranilate binding site. Mg(2+) is bound at residue S91. Residue N110 coordinates anthranilate. Position 165 (R165) interacts with anthranilate. The Mg(2+) site is built by D224 and E225.

Belongs to the anthranilate phosphoribosyltransferase family. Homodimer. It depends on Mg(2+) as a cofactor.

The enzyme catalyses N-(5-phospho-beta-D-ribosyl)anthranilate + diphosphate = 5-phospho-alpha-D-ribose 1-diphosphate + anthranilate. It functions in the pathway amino-acid biosynthesis; L-tryptophan biosynthesis; L-tryptophan from chorismate: step 2/5. Catalyzes the transfer of the phosphoribosyl group of 5-phosphorylribose-1-pyrophosphate (PRPP) to anthranilate to yield N-(5'-phosphoribosyl)-anthranilate (PRA). This chain is Anthranilate phosphoribosyltransferase, found in Endomicrobium trichonymphae.